The primary structure comprises 501 residues: Chromosomal replication initiator protein DnaA (501 aa).

Residues 1-90 (MSVELWQQCV…KRSSAPRAAP (90 aa)) are domain I, interacts with DnaA modulators. The tract at residues 91–164 (NAPLAAAASQ…QVEGALKHTS (74 aa)) is domain II. A compositionally biased stretch (low complexity) spans 103–121 (AAPVASTPAPAPSKSSAKK). The disordered stretch occupies residues 103–150 (AAPVASTPAPAPSKSSAKKNAAENEEPSRDSFDPMAGASSQQAPIRAE). Residues 122–134 (NAAENEEPSRDSF) show a composition bias toward basic and acidic residues. Positions 165-381 (YLNRTFTFEN…GALKRVIAHS (217 aa)) are domain III, AAA+ region. ATP-binding residues include Gly209, Gly211, Lys212, and Thr213. The segment at 382–501 (HFMGRDITIE…YKNLLRTLTT (120 aa)) is domain IV, binds dsDNA.

This sequence belongs to the DnaA family. Oligomerizes as a right-handed, spiral filament on DNA at oriC.

The protein resides in the cytoplasm. Plays an essential role in the initiation and regulation of chromosomal replication. ATP-DnaA binds to the origin of replication (oriC) to initiate formation of the DNA replication initiation complex once per cell cycle. Binds the DnaA box (a 9 base pair repeat at the origin) and separates the double-stranded (ds)DNA. Forms a right-handed helical filament on oriC DNA; dsDNA binds to the exterior of the filament while single-stranded (ss)DNA is stabiized in the filament's interior. The ATP-DnaA-oriC complex binds and stabilizes one strand of the AT-rich DNA unwinding element (DUE), permitting loading of DNA polymerase. After initiation quickly degrades to an ADP-DnaA complex that is not apt for DNA replication. Binds acidic phospholipids. In Pseudomonas fluorescens (strain SBW25), this protein is Chromosomal replication initiator protein DnaA.